The following is a 178-amino-acid chain: Adenine phosphoribosyltransferase (178 aa).

Belongs to the purine/pyrimidine phosphoribosyltransferase family. In terms of assembly, homodimer.

The protein localises to the cytoplasm. The enzyme catalyses AMP + diphosphate = 5-phospho-alpha-D-ribose 1-diphosphate + adenine. Its pathway is purine metabolism; AMP biosynthesis via salvage pathway; AMP from adenine: step 1/1. Functionally, catalyzes a salvage reaction resulting in the formation of AMP, that is energically less costly than de novo synthesis. The chain is Adenine phosphoribosyltransferase from Mycoplasmoides gallisepticum (strain R(low / passage 15 / clone 2)) (Mycoplasma gallisepticum).